Reading from the N-terminus, the 234-residue chain is MTTSDLPAFWTVIPAAGVGSRMRADRPKQYLDLAGRTVIERTLDCFLEHPMLRGLVVCLAEDDPYWPGLDCAASRHVQRAAGGVERADSVLSGLLRLLELGAQADDWVLVHDAARPNLTRGDLDRLLEELAEDPVGGLLAVPARDTLKRADRDGRVSETIDRSVVWLAYTPQMFRLGALHRALADALVAGVAITDEASAMEWAGYAPKLVEGRADNLKITTPEDLLRLQRSFPH.

This sequence belongs to the IspD/TarI cytidylyltransferase family. IspD subfamily.

It catalyses the reaction 2-C-methyl-D-erythritol 4-phosphate + CTP + H(+) = 4-CDP-2-C-methyl-D-erythritol + diphosphate. It functions in the pathway isoprenoid biosynthesis; isopentenyl diphosphate biosynthesis via DXP pathway; isopentenyl diphosphate from 1-deoxy-D-xylulose 5-phosphate: step 2/6. Its function is as follows. Catalyzes the formation of 4-diphosphocytidyl-2-C-methyl-D-erythritol from CTP and 2-C-methyl-D-erythritol 4-phosphate (MEP). This is 2-C-methyl-D-erythritol 4-phosphate cytidylyltransferase from Pseudomonas aeruginosa (strain UCBPP-PA14).